A 428-amino-acid chain; its full sequence is GTPase Obg (428 aa).

The region spanning 1–158 (MFVDQVKVYV…RYIVLELKVL (158 aa)) is the Obg domain. The disordered stretch occupies residues 117–143 (AKGGRGGRGNTRFATPANPAPQLSEHG). One can recognise an OBG-type G domain in the interval 159 to 329 (ADVGLVGFPS…LLFEVANQLE (171 aa)). GTP-binding positions include 165 to 172 (GFPSVGKS), 190 to 194 (FTTLV), 212 to 215 (DLPG), 282 to 285 (NKMD), and 310 to 312 (SAV). Residues Ser-172 and Thr-192 each coordinate Mg(2+). One can recognise an OCT domain in the interval 350–428 (TMEDEEIPFN…LLEFEFEFID (79 aa)).

Belongs to the TRAFAC class OBG-HflX-like GTPase superfamily. OBG GTPase family. In terms of assembly, monomer. It depends on Mg(2+) as a cofactor.

The protein resides in the cytoplasm. Its function is as follows. An essential GTPase which binds GTP, GDP and possibly (p)ppGpp with moderate affinity, with high nucleotide exchange rates and a fairly low GTP hydrolysis rate. Plays a role in control of the cell cycle, stress response, ribosome biogenesis and in those bacteria that undergo differentiation, in morphogenesis control. This is GTPase Obg from Bacillus velezensis (strain DSM 23117 / BGSC 10A6 / LMG 26770 / FZB42) (Bacillus amyloliquefaciens subsp. plantarum).